A 161-amino-acid chain; its full sequence is Transcription elongation factor GreA (161 aa).

Positions Asn-45–Ala-72 form a coiled coil.

Belongs to the GreA/GreB family.

Its function is as follows. Necessary for efficient RNA polymerase transcription elongation past template-encoded arresting sites. The arresting sites in DNA have the property of trapping a certain fraction of elongating RNA polymerases that pass through, resulting in locked ternary complexes. Cleavage of the nascent transcript by cleavage factors such as GreA or GreB allows the resumption of elongation from the new 3'terminus. GreA releases sequences of 2 to 3 nucleotides. The polypeptide is Transcription elongation factor GreA (Aliarcobacter butzleri (strain RM4018) (Arcobacter butzleri)).